Reading from the N-terminus, the 519-residue chain is Serine/threonine-protein kinase RIO3 (519 aa).

A phosphoserine mark is found at Ser-8, Ser-112, Ser-125, Ser-127, and Ser-128. A disordered region spans residues 122-159 (FEDSDSSEDEVDWQDTRDDPYRPAKPIPTPKKGFIGKG). Residues 124-134 (DSDSSEDEVDW) are compositionally biased toward acidic residues. The Protein kinase domain occupies 251-519 (ETITGCISTG…DGSPPVLSAD (269 aa)). ATP contacts are provided by residues 257 to 265 (ISTGKESVV) and Lys-290. Asp-406 acts as the Proton acceptor in catalysis. Ser-512 bears the Phosphoserine mark.

It belongs to the protein kinase superfamily. RIO-type Ser/Thr kinase family. Interacts with CASP10. Interacts with IRF3; RIOK3 probably mediates the interaction of TBK1 with IRF3. Associated with 40S pre-ribosomal particles. Mg(2+) is required as a cofactor. Autophosphorylated (in vitro).

It localises to the cytoplasm. The catalysed reaction is L-seryl-[protein] + ATP = O-phospho-L-seryl-[protein] + ADP + H(+). It carries out the reaction L-threonyl-[protein] + ATP = O-phospho-L-threonyl-[protein] + ADP + H(+). In terms of biological role, involved in regulation of type I interferon (IFN)-dependent immune response which plays a critical role in the innate immune response against DNA and RNA viruses. May act as an adapter protein essential for the recruitment of TBK1 to IRF3. Phosphorylates IFIH1 on 'Ser-828' interfering with IFIH1 filament assembly on long dsRNA and resulting in attenuated IFIH1-signaling. Can inhibit CASP10 isoform 7-mediated activation of the NF-kappaB signaling pathway. May play a role in the biogenesis of the 40S ribosomal subunit. Involved in the processing of 21S pre-rRNA to the mature 18S rRNA. This is Serine/threonine-protein kinase RIO3 (Riok3) from Mus musculus (Mouse).